We begin with the raw amino-acid sequence, 216 residues long: Transmembrane protein 139 (216 aa).

Positions 1–25 are cleaved as a signal peptide; it reads MVPMHLLGRLEKPLLLLCCASFLLG. At 26-34 the chain is on the extracellular side; it reads LALLGIKTD. The chain crosses the membrane as a helical span at residues 35 to 55; it reads ITPVAYFFLTLGGFFLFAYLL. The Cytoplasmic portion of the chain corresponds to 56 to 216; sequence VRFLEWGLRS…VFYEDNWAPP (161 aa). Residues 104-163 are disordered; the sequence is RPQELDQPPPYSTVVIPPAPEEEQPSHPEGSRRAKLEQRRMASEGSMAQEGSPGRAPINL. Positions 127–145 are enriched in basic and acidic residues; it reads QPSHPEGSRRAKLEQRRMA. A phosphoserine mark is found at Ser-146 and Ser-155.

Interacts with isoform 2 of SLC4A1.

It localises to the membrane. Functionally, may be involved in cellular trafficking of proteins such as SLC4A1. This chain is Transmembrane protein 139 (TMEM139), found in Homo sapiens (Human).